A 362-amino-acid polypeptide reads, in one-letter code: Histidinol-phosphate aminotransferase (362 aa).

Lys-218 carries the post-translational modification N6-(pyridoxal phosphate)lysine.

It belongs to the class-II pyridoxal-phosphate-dependent aminotransferase family. Histidinol-phosphate aminotransferase subfamily. As to quaternary structure, homodimer. The cofactor is pyridoxal 5'-phosphate.

The enzyme catalyses L-histidinol phosphate + 2-oxoglutarate = 3-(imidazol-4-yl)-2-oxopropyl phosphate + L-glutamate. The protein operates within amino-acid biosynthesis; L-histidine biosynthesis; L-histidine from 5-phospho-alpha-D-ribose 1-diphosphate: step 7/9. The protein is Histidinol-phosphate aminotransferase of Xanthomonas campestris pv. campestris (strain B100).